The sequence spans 265 residues: Ubiquinone biosynthesis protein COQ4 homolog, mitochondrial (265 aa).

A mitochondrion-targeting transit peptide spans 1-30 (MMQRSWQSWRRGLTLGLASRRSYVASVEAP). Zn(2+) is bound by residues histidine 170, aspartate 171, histidine 174, and glutamate 186.

This sequence belongs to the COQ4 family. In terms of assembly, component of a multi-subunit COQ enzyme complex. Requires Zn(2+) as cofactor.

It localises to the mitochondrion inner membrane. It carries out the reaction a 4-hydroxy-3-methoxy-5-(all-trans-polyprenyl)benzoate + H(+) = a 2-methoxy-6-(all-trans-polyprenyl)phenol + CO2. The protein operates within cofactor biosynthesis; ubiquinone biosynthesis. Its function is as follows. Lyase that catalyzes the C1-decarboxylation of 4-hydroxy-3-methoxy-5-(all-trans-polyprenyl)benzoic acid into 2-methoxy-6-(all-trans-polyprenyl)phenol during ubiquinone biosynthesis. The sequence is that of Ubiquinone biosynthesis protein COQ4 homolog, mitochondrial from Drosophila virilis (Fruit fly).